The following is a 122-amino-acid chain: Holo-[acyl-carrier-protein] synthase (122 aa).

2 residues coordinate Mg(2+): aspartate 8 and glutamate 52.

The protein belongs to the P-Pant transferase superfamily. AcpS family. Mg(2+) is required as a cofactor.

The protein localises to the cytoplasm. The enzyme catalyses apo-[ACP] + CoA = holo-[ACP] + adenosine 3',5'-bisphosphate + H(+). In terms of biological role, transfers the 4'-phosphopantetheine moiety from coenzyme A to a Ser of acyl-carrier-protein. In Lachnoclostridium phytofermentans (strain ATCC 700394 / DSM 18823 / ISDg) (Clostridium phytofermentans), this protein is Holo-[acyl-carrier-protein] synthase.